Consider the following 743-residue polypeptide: NAD(P)H-quinone oxidoreductase subunit 5, chloroplastic (743 aa).

14 helical membrane-spanning segments follow: residues 9 to 29 (WIIPFVPLPVPMLIGVGLLLF), 40 to 60 (WAFHSVLLLSIVMIFSIDLSI), 89 to 109 (IDPLTSIMLILITTVGIMVLI), 125 to 145 (FAYMSFFSTSMLGLVTSSNLI), 147 to 167 (IYIFWELVGMCSYLLIGFWFT), 184 to 204 (IGDLGLLLGILGFYWITGSFE), 219 to 239 (NEVNLVFLTICAVLLFAGAVA), 258 to 278 (TPISALIHAATMVAAGIFLVA), 280 to 300 (LLPLFIVIPYILNLISFIGII), 396 to 416 (TAFFLGTLSLCGIPPLACFWS), 425 to 445 (WLYSPIFAIIACSTAGLTAFY), 548 to 568 (LLPLLVLVLFTLFVGAIGIPF), 607 to 627 (IFSVSIAYFGIVIASFLYKPV), and 723 to 743 (YLFLYLSYVSIFLLIYYFLNL).

Belongs to the complex I subunit 5 family. In terms of assembly, NDH is composed of at least 16 different subunits, 5 of which are encoded in the nucleus.

It is found in the plastid. Its subcellular location is the chloroplast thylakoid membrane. It catalyses the reaction a plastoquinone + NADH + (n+1) H(+)(in) = a plastoquinol + NAD(+) + n H(+)(out). It carries out the reaction a plastoquinone + NADPH + (n+1) H(+)(in) = a plastoquinol + NADP(+) + n H(+)(out). Its function is as follows. NDH shuttles electrons from NAD(P)H:plastoquinone, via FMN and iron-sulfur (Fe-S) centers, to quinones in the photosynthetic chain and possibly in a chloroplast respiratory chain. The immediate electron acceptor for the enzyme in this species is believed to be plastoquinone. Couples the redox reaction to proton translocation, and thus conserves the redox energy in a proton gradient. This chain is NAD(P)H-quinone oxidoreductase subunit 5, chloroplastic (ndhF), found in Carpenteria californica (Tree anemone).